Consider the following 1232-residue polypeptide: uncharacterized protein (1232 aa).

It belongs to the Mg-chelatase subunit H family.

This is an uncharacterized protein from Methanocaldococcus jannaschii (strain ATCC 43067 / DSM 2661 / JAL-1 / JCM 10045 / NBRC 100440) (Methanococcus jannaschii).